The primary structure comprises 68 residues: UPF0435 protein SA1696 (68 aa).

The protein belongs to the UPF0435 family.

This Staphylococcus aureus (strain N315) protein is UPF0435 protein SA1696.